Reading from the N-terminus, the 214-residue chain is 3-isopropylmalate dehydratase small subunit (214 aa).

Belongs to the LeuD family. LeuD type 1 subfamily. As to quaternary structure, heterodimer of LeuC and LeuD.

The catalysed reaction is (2R,3S)-3-isopropylmalate = (2S)-2-isopropylmalate. It participates in amino-acid biosynthesis; L-leucine biosynthesis; L-leucine from 3-methyl-2-oxobutanoate: step 2/4. In terms of biological role, catalyzes the isomerization between 2-isopropylmalate and 3-isopropylmalate, via the formation of 2-isopropylmaleate. In Pseudomonas entomophila (strain L48), this protein is 3-isopropylmalate dehydratase small subunit.